We begin with the raw amino-acid sequence, 591 residues long: ESX-1 secretion system protein EccCb1 (591 aa).

FtsK domains are found at residues 65–259 and 359–545; these read LQDV…NETQ and LTPA…EKQE. ATP contacts are provided by residues 84-91 and 376-383; these read GAPQTGKS and GAAKSGKT.

In terms of assembly, part of the ESX-1 / type VII secretion system (T7SS), which is composed of cytosolic and membrane components. The ESX-1 membrane complex is composed of EccB1, EccCa1, EccCb1, EccD1 and EccE1. Interacts with EccCa1, EspK and the C-terminus of EsxB. Residues 1-261 interact with EsxB and an artificial EsxB-EsxA heterodimer.

The protein localises to the cytoplasm. EsxB binding to the second FtsK domain of EccCb1 causes multimerization; a subsequent unknown step relieves the allosteric inhibition of linker 2 on FtsK domain 1 (in EccCa1 subunit), activating the ATPase activity. Functionally, part of the ESX-1 specialized secretion system, which delivers several virulence factors to host cells during infection, including the key virulence factors EsxA (ESAT-6) and EsxB (CFP-10). EccCb1 may link the cytosolic components of the system with the membrane components. The chain is ESX-1 secretion system protein EccCb1 from Mycobacterium tuberculosis (strain ATCC 25618 / H37Rv).